The primary structure comprises 451 residues: Cobalamin reductase PduS (451 aa).

2 4Fe-4S ferredoxin-type domains span residues 255–284 and 300–330; these read TVLS…HELS and PQLL…MRIN. [4Fe-4S] cluster is bound by residues C264, C267, C270, C274, C309, C312, C315, and C320.

Belongs to the PduS cobalamin reductase family. In terms of assembly, monomeric when purified anaerobically, dimeric under aerobic conditions. Forms a complex with PduO. Interacts with PduT, probably via the N-terminus of PduS. The cofactor is [4Fe-4S] cluster. Requires FMN as cofactor.

It is found in the bacterial microcompartment. The protein operates within polyol metabolism; 1,2-propanediol degradation. A protein that aids in conversion of cob(III)alamin to cob(II)alamin and then to cob(I)alamin in the bacterial microcompartment (BMC) dedicated to 1,2-propanediol (1,2-PD) degradation. The latter step requires PduO. No free cob(I)alamin is released, suggesting a complex is formed with PduO that finishes conversion to adenosylcobalamin. PduS and PduO allow regeneration of the adenosylcobalamin cofactor within the BMC. Another study showed reduction of cob(II)alamin to cob(I)alamin in the absence of PduO. Both reactions require NADH. Cyanocobalamin (CN-Cbl) is not a substrate for the first reaction. Cobalamin reduction probably occurs spontaneously in the presence of free reduced flavin nucleotides, this protein may be involved in electron transfer for this reduction. Functionally, the 1,2-PD-specific bacterial microcompartment (BMC) concentrates low levels of 1,2-PD catabolic enzymes, concentrates volatile reaction intermediates thus enhancing pathway flux and keeps the level of toxic, mutagenic propionaldehyde low. This chain is Cobalamin reductase PduS, found in Salmonella typhimurium (strain LT2 / SGSC1412 / ATCC 700720).